A 520-amino-acid chain; its full sequence is Hydroxymethylglutaryl-CoA synthase, cytoplasmic (520 aa).

S4 carries the post-translational modification Phosphoserine. Residues D43 and A44 each coordinate (3S)-3-hydroxy-3-methylglutaryl-CoA. 44 to 46 (AGK) is a binding site for CoA. K46 is subject to N6-acetyllysine. E95 serves as the catalytic Proton donor/acceptor. The (3S)-3-hydroxy-3-methylglutaryl-CoA site is built by C129, N167, T171, S221, and H264. C129 acts as the Acyl-thioester intermediate in catalysis. N167 is a CoA binding site. CoA is bound at residue S221. H264 acts as the Proton donor/acceptor in catalysis. CoA contacts are provided by K269 and K273. Residues K273, N343, and S377 each coordinate (3S)-3-hydroxy-3-methylglutaryl-CoA. Residue K273 is modified to N6-acetyllysine. The segment at 488–520 (TATEHIPSPAKKVPRLPATSAESESAVISNGEH) is disordered. A phosphoserine mark is found at S495 and S516. Over residues 507-520 (SAESESAVISNGEH) the composition is skewed to polar residues.

The protein belongs to the thiolase-like superfamily. HMG-CoA synthase family. As to quaternary structure, homodimer.

It is found in the cytoplasm. It catalyses the reaction acetoacetyl-CoA + acetyl-CoA + H2O = (3S)-3-hydroxy-3-methylglutaryl-CoA + CoA + H(+). The protein operates within metabolic intermediate biosynthesis; (R)-mevalonate biosynthesis; (R)-mevalonate from acetyl-CoA: step 2/3. Functionally, catalyzes the condensation of acetyl-CoA with acetoacetyl-CoA to form HMG-CoA, which is converted by HMG-CoA reductase (HMGCR) into mevalonate, a precursor for cholesterol synthesis. This Mus musculus (Mouse) protein is Hydroxymethylglutaryl-CoA synthase, cytoplasmic.